We begin with the raw amino-acid sequence, 424 residues long: Histidine--tRNA ligase (424 aa).

The protein belongs to the class-II aminoacyl-tRNA synthetase family. In terms of assembly, homodimer.

The protein localises to the cytoplasm. It carries out the reaction tRNA(His) + L-histidine + ATP = L-histidyl-tRNA(His) + AMP + diphosphate + H(+). The sequence is that of Histidine--tRNA ligase from Marinomonas sp. (strain MWYL1).